The following is a 524-amino-acid chain: Thioredoxin reductase 2, mitochondrial (524 aa).

A mitochondrion-targeting transit peptide spans 1 to 34 (MVAAMVAALRGPSRRFRPRTRALTRGTRGAASAA). 41–70 (DLLVIGGGSGGLACAKEAAQLGKKVAVADY) serves as a coordination point for FAD. At K79 the chain carries N6-succinyllysine. Residues C86 and C91 are joined by a disulfide bond. N6-succinyllysine is present on residues K175 and K329. H497 serves as the catalytic Proton acceptor. The segment at residues 522–523 (CU) is a cross-link (cysteinyl-selenocysteine (Cys-Sec)). Residue U523 is a non-standard amino acid, selenocysteine.

The protein belongs to the class-I pyridine nucleotide-disulfide oxidoreductase family. Homodimer. It depends on FAD as a cofactor. Expressed in liver, heart, testis and kidney.

It localises to the mitochondrion. The enzyme catalyses [thioredoxin]-dithiol + NADP(+) = [thioredoxin]-disulfide + NADPH + H(+). Involved in the control of reactive oxygen species levels and the regulation of mitochondrial redox homeostasis. Maintains thioredoxin in a reduced state. May play a role in redox-regulated cell signaling. This Mus musculus (Mouse) protein is Thioredoxin reductase 2, mitochondrial.